The sequence spans 294 residues: Nucleotide-binding protein NT01CX_1284 (294 aa).

8–15 (GLSGAGKS) is a binding site for ATP. 59–62 (DIRG) serves as a coordination point for GTP.

It belongs to the RapZ-like family.

Displays ATPase and GTPase activities. In Clostridium novyi (strain NT), this protein is Nucleotide-binding protein NT01CX_1284.